The sequence spans 186 residues: Calcium load-activated calcium channel homolog (186 aa).

Residues 1-6 lie on the Cytoplasmic side of the membrane; it reads MLGDCL. Residues 7 to 27 traverse the membrane as a helical segment; sequence LIIAIAFGTALAGEGITWLLV. Residues 28-87 are Lumenal-facing; the sequence is YRSDHYKRLKADMDKKTKKLEKKKQEVGDTNDKNIKRKLEREEERLKATNRDMSMFKMKS. Residues 30 to 86 are a coiled coil; that stretch reads SDHYKRLKADMDKKTKKLEKKKQEVGDTNDKNIKRKLEREEERLKATNRDMSMFKMK. Residues 88–108 form a helical membrane-spanning segment; the sequence is MFAIGLAFTALLSTFNSIFEG. Over 109-134 the chain is Cytoplasmic; it reads RVVAKLPFYPIGFIQGLSHRNLIGED. Positions 135–151 form an intramembrane region, pore-forming; sequence MTDCSFIFLYILCTMTV. Topologically, residues 152 to 186 are cytoplasmic; the sequence is RQNLQKILGFAPSRAMARQQSSPWAPPNSQMNYLR.

It belongs to the TMCO1 family. As to quaternary structure, homodimer and homotetramer.

Its subcellular location is the endoplasmic reticulum membrane. In terms of biological role, calcium-selective channel required to prevent calcium stores from overfilling. The chain is Calcium load-activated calcium channel homolog from Caenorhabditis elegans.